Consider the following 436-residue polypeptide: 3-ketoacyl-CoA thiolase (436 aa).

C99 (acyl-thioester intermediate) is an active-site residue. Residues H392 and C422 each act as proton acceptor in the active site.

It belongs to the thiolase-like superfamily. Thiolase family. In terms of assembly, heterotetramer of two alpha chains (FadJ) and two beta chains (FadI).

The protein localises to the cytoplasm. The catalysed reaction is an acyl-CoA + acetyl-CoA = a 3-oxoacyl-CoA + CoA. It participates in lipid metabolism; fatty acid beta-oxidation. Its function is as follows. Catalyzes the final step of fatty acid oxidation in which acetyl-CoA is released and the CoA ester of a fatty acid two carbons shorter is formed. The polypeptide is 3-ketoacyl-CoA thiolase (Pseudoalteromonas atlantica (strain T6c / ATCC BAA-1087)).